The primary structure comprises 299 residues: uncharacterized protein (299 aa).

8 helical membrane passes run 13–33 (ILFL…LHFM), 36–56 (AFVI…FLML), 79–99 (SFGI…VIII), 112–132 (TAIG…ISVI), 151–171 (ITSE…LFFI), 201–221 (FLIL…VILV), 241–261 (YVIL…MLLS), and 267–287 (PPGP…FLII).

This sequence belongs to the ABC-3 integral membrane protein family.

It is found in the plastid. Its subcellular location is the cyanelle membrane. This is an uncharacterized protein from Cyanophora paradoxa.